Reading from the N-terminus, the 357-residue chain is Probable leucine aminopeptidase TRV_02148.1 (357 aa).

The N-terminal stretch at 1–15 (MKVLAALALSALAMA) is a signal peptide. Asn76 carries N-linked (GlcNAc...) asparagine glycosylation. The Zn(2+) site is built by His167 and Asp185. The tract at residues 169 to 188 (DSINGKNPQGEAPGADDNGS) is disordered. Asn186 carries an N-linked (GlcNAc...) asparagine glycan. Residues Glu224 and Asp251 each coordinate Zn(2+). Asn269 carries an N-linked (GlcNAc...) asparagine glycan. An intrachain disulfide couples Cys291 to Cys295. His324 is a Zn(2+) binding site.

The protein belongs to the peptidase M28 family. M28E subfamily. In terms of assembly, monomer. The cofactor is Zn(2+).

The protein resides in the secreted. In terms of biological role, probable extracellular aminopeptidase which contributes to pathogenicity. This is Probable leucine aminopeptidase TRV_02148.1 from Trichophyton verrucosum (strain HKI 0517).